A 320-amino-acid chain; its full sequence is GTPase Era (320 aa).

One can recognise an Era-type G domain in the interval 25–193 (HCGFIAIVGR…RKHVRDHLPK (169 aa)). The segment at 33–40 (GRPNVGKS) is G1. 33-40 (GRPNVGKS) is a binding site for GTP. Positions 59–63 (QTTRH) are G2. A G3 region spans residues 80 to 83 (DTPG). GTP contacts are provided by residues 80-84 (DTPGL) and 142-145 (NKVD). The G4 stretch occupies residues 142–145 (NKVD). The G5 stretch occupies residues 172 to 174 (ISA). Positions 216–302 (VREKLMRFTG…YLETWVKVKS (87 aa)) constitute a KH type-2 domain.

It belongs to the TRAFAC class TrmE-Era-EngA-EngB-Septin-like GTPase superfamily. Era GTPase family. As to quaternary structure, monomer.

It localises to the cytoplasm. It is found in the cell inner membrane. In terms of biological role, an essential GTPase that binds both GDP and GTP, with rapid nucleotide exchange. Plays a role in 16S rRNA processing and 30S ribosomal subunit biogenesis and possibly also in cell cycle regulation and energy metabolism. This chain is GTPase Era, found in Vibrio vulnificus (strain CMCP6).